Reading from the N-terminus, the 307-residue chain is Dihydroorotate dehydrogenase A (fumarate) (307 aa).

Residues serine 21 and 46–47 contribute to the FMN site; that span reads KT. Substrate contacts are provided by residues lysine 46, 70–74, and asparagine 130; that span reads NSVGL. Asparagine 130 is a binding site for FMN. The Nucleophile role is filled by cysteine 133. FMN contacts are provided by lysine 168 and isoleucine 194. Substrate is bound at residue 195–196; it reads NT. FMN is bound by residues glycine 220, 246–247, and 268–269; these read GG and GS.

Belongs to the dihydroorotate dehydrogenase family. Type 1 subfamily. Homodimer. FMN serves as cofactor.

It is found in the cytoplasm. It catalyses the reaction (S)-dihydroorotate + fumarate = orotate + succinate. The protein operates within pyrimidine metabolism; UMP biosynthesis via de novo pathway. Catalyzes the conversion of dihydroorotate to orotate with fumarate as the electron acceptor. This is Dihydroorotate dehydrogenase A (fumarate) (pyrD) from Lactobacillus delbrueckii subsp. bulgaricus (strain ATCC 11842 / DSM 20081 / BCRC 10696 / JCM 1002 / NBRC 13953 / NCIMB 11778 / NCTC 12712 / WDCM 00102 / Lb 14).